A 427-amino-acid chain; its full sequence is MLDIKRLRQDFEGIKEKLAHRGEDLSALDRFPQLEEKRRDLINEVEVKKAKRNEATKQIAELKRNKEDAEGPILETRRLGDEIKLLDEELREVEAELNLILLSIPNIPHESTPIGETEDDNVTIREIGTKPEFDFEPKQHWDVMEDLQIVDVERAGKVTGSRFVFYKGLGARLERALINFMMDLHSDEHGYAEVLPPYMVNRDSMTGTGQLPKFEEDAFKVADTNYFLVPTAEVPVTNMHREEILPETQLPIAYTAYSANFRSEAGSAGRDTRGLIRQHQFNKVELVRFVKPEESYEQLELLTGHAEEVLKRLGLPYQVLSMCTADLGFTAAKKYDIEVWMPAQGVYREISSCSNFEDFQARRAGIRFRRDANAKPEFVHTLNGSGLAVGRTVAAILENYQQADGSVVIPEVLRPYMGGKEKIEMPN.

231 to 233 (TAE) provides a ligand contact to L-serine. Residue 262–264 (RSE) participates in ATP binding. E285 lines the L-serine pocket. Residue 349 to 352 (EISS) participates in ATP binding. S385 lines the L-serine pocket.

This sequence belongs to the class-II aminoacyl-tRNA synthetase family. Type-1 seryl-tRNA synthetase subfamily. Homodimer. The tRNA molecule binds across the dimer.

Its subcellular location is the cytoplasm. It catalyses the reaction tRNA(Ser) + L-serine + ATP = L-seryl-tRNA(Ser) + AMP + diphosphate + H(+). The enzyme catalyses tRNA(Sec) + L-serine + ATP = L-seryl-tRNA(Sec) + AMP + diphosphate + H(+). The protein operates within aminoacyl-tRNA biosynthesis; selenocysteinyl-tRNA(Sec) biosynthesis; L-seryl-tRNA(Sec) from L-serine and tRNA(Sec): step 1/1. Its function is as follows. Catalyzes the attachment of serine to tRNA(Ser). Is also able to aminoacylate tRNA(Sec) with serine, to form the misacylated tRNA L-seryl-tRNA(Sec), which will be further converted into selenocysteinyl-tRNA(Sec). This chain is Serine--tRNA ligase, found in Exiguobacterium sp. (strain ATCC BAA-1283 / AT1b).